Reading from the N-terminus, the 305-residue chain is UDP-3-O-acyl-N-acetylglucosamine deacetylase (305 aa).

His79, His238, and Asp242 together coordinate Zn(2+). Residue His265 is the Proton donor of the active site.

Belongs to the LpxC family. The cofactor is Zn(2+).

It carries out the reaction a UDP-3-O-[(3R)-3-hydroxyacyl]-N-acetyl-alpha-D-glucosamine + H2O = a UDP-3-O-[(3R)-3-hydroxyacyl]-alpha-D-glucosamine + acetate. Its pathway is glycolipid biosynthesis; lipid IV(A) biosynthesis; lipid IV(A) from (3R)-3-hydroxytetradecanoyl-[acyl-carrier-protein] and UDP-N-acetyl-alpha-D-glucosamine: step 2/6. Functionally, catalyzes the hydrolysis of UDP-3-O-myristoyl-N-acetylglucosamine to form UDP-3-O-myristoylglucosamine and acetate, the committed step in lipid A biosynthesis. The polypeptide is UDP-3-O-acyl-N-acetylglucosamine deacetylase (Enterobacter sp. (strain 638)).